Reading from the N-terminus, the 372-residue chain is Actin-related protein T3 (372 aa).

It belongs to the actin family. As to quaternary structure, interacts with PFN3. As to expression, ubiquitously expressed.

Its subcellular location is the cytoplasm. The protein localises to the cytoskeleton. The protein resides in the nucleus. The sequence is that of Actin-related protein T3 (ACTRT3) from Homo sapiens (Human).